The chain runs to 1454 residues: Serine/threonine-protein kinase VPS15 (1454 aa).

G2 is lipidated: N-myristoyl glycine. Positions 27-300 (VHYVSQLNSS…LLNKYRGIFF (274 aa)) constitute a Protein kinase domain. Residues 33 to 41 (LNSSRFLKT) and K54 each bind ATP. The Proton acceptor role is filled by D147. 4 HEAT repeats span residues 460–497 (NKIDRVVPYFVCCFEDSDQDVQALSLLTLIQVLTSVRK), 576–613 (KLIQSVEDLTVSFLTDNDTYVKMALLQNILPLCKFFGR), 615–652 (RTNDIILSHLITYLNDKDPALRVSLIQTISGISILLGT), and 654–691 (TLEQYILPLLIQTITDSEELVVISVLQSLKSLFKTGLI). WD repeat units lie at residues 1078–1118 (NEPN…VGEV), 1126–1165 (DCSSTVTQITMIPNFDAFAVSSKDGQIIVLKVNHYQQESE), 1229–1268 (PRHGAVSSICIDEECCVLILGTTRGIIDIWDIRFNVLIRS), 1275–1315 (APIT…CQYA), 1344–1382 (RSLNALSTISVSNDKILLTDEATSSIVMFSLNELSSSKA), and 1422–1454 (YHHDIINSISTCEVDETPLLVACDNSGLIGIFQ).

Belongs to the protein kinase superfamily. Ser/Thr protein kinase family. In terms of assembly, component of the autophagy-specific VPS34 PI3-kinase complex I composed of VPS15, VPS30, VPS34, ATG14 and ATG38; and of the VPS34 PI3-kinase complex II composed of VPS15, VPS30, VPS34 and VPS38. Interacts directly with ATG14 and GPA1. Interacts directly with VPS34. Autophosphorylated.

The protein localises to the golgi apparatus. The protein resides in the trans-Golgi network membrane. It localises to the endosome membrane. The catalysed reaction is L-seryl-[protein] + ATP = O-phospho-L-seryl-[protein] + ADP + H(+). The enzyme catalyses L-threonyl-[protein] + ATP = O-phospho-L-threonyl-[protein] + ADP + H(+). Serine/threonine-protein kinase required for cytoplasm to vacuole transport (Cvt) and autophagy as a part of the autophagy-specific VPS34 PI3-kinase complex I. This complex is essential to recruit the ATG8-phosphatidylinositol conjugate and the ATG12-ATG5 conjugate to the pre-autophagosomal structure. Is also involved in endosome-to-Golgi retrograde transport as part of the VPS34 PI3-kinase complex II. This second complex is required for the endosome-to-Golgi retrieval of PEP1 and KEX2, and the recruitment of VPS5 and VPS7, two components of the retromer complex, to endosomal membranes (probably through the synthesis of a specific pool of phosphatidylinositol 3-phosphate recruiting the retromer to the endosomes). By regulating VPS34 kinase activity, VPS15 appears to be essential for the efficient delivery of soluble hydrolases to the yeast vacuole. May function as a G protein beta subunit to propagate the pheromone response at the endosome with GPA1. This Saccharomyces cerevisiae (strain ATCC 204508 / S288c) (Baker's yeast) protein is Serine/threonine-protein kinase VPS15.